The sequence spans 272 residues: Shikimate dehydrogenase (NADP(+)) (272 aa).

Residues 14 to 16 (SKS) and Thr61 each bind shikimate. Catalysis depends on Lys65, which acts as the Proton acceptor. Position 77 (Glu77) interacts with NADP(+). Shikimate contacts are provided by Asn86 and Asp102. NADP(+) contacts are provided by residues 126 to 130 (GAGGA), 149 to 154 (NRTVSR), and Met213. Tyr215 serves as a coordination point for shikimate. Gly237 lines the NADP(+) pocket.

It belongs to the shikimate dehydrogenase family. Homodimer.

The catalysed reaction is shikimate + NADP(+) = 3-dehydroshikimate + NADPH + H(+). It functions in the pathway metabolic intermediate biosynthesis; chorismate biosynthesis; chorismate from D-erythrose 4-phosphate and phosphoenolpyruvate: step 4/7. Its function is as follows. Involved in the biosynthesis of the chorismate, which leads to the biosynthesis of aromatic amino acids. Catalyzes the reversible NADPH linked reduction of 3-dehydroshikimate (DHSA) to yield shikimate (SA). In Escherichia coli (strain SMS-3-5 / SECEC), this protein is Shikimate dehydrogenase (NADP(+)).